Consider the following 618-residue polypeptide: Probable Xaa-Pro aminopeptidase P (618 aa).

4 residues coordinate Mn(2+): aspartate 414, aspartate 425, glutamate 523, and glutamate 537.

This sequence belongs to the peptidase M24B family. Requires Mn(2+) as cofactor.

The enzyme catalyses Release of any N-terminal amino acid, including proline, that is linked to proline, even from a dipeptide or tripeptide.. Catalyzes the removal of a penultimate prolyl residue from the N-termini of peptides. This chain is Probable Xaa-Pro aminopeptidase P (AMPP), found in Metarhizium acridum (strain CQMa 102).